The sequence spans 230 residues: Probable cytokinin riboside 5'-monophosphate phosphoribohydrolase LOG4 (230 aa).

Residues E91, 109 to 110 (RK), and 126 to 132 (GYGTIEE) each bind substrate.

It belongs to the LOG family.

The enzyme catalyses N(6)-(dimethylallyl)adenosine 5'-phosphate + H2O = N(6)-dimethylallyladenine + D-ribose 5-phosphate. It catalyses the reaction 9-ribosyl-trans-zeatin 5'-phosphate + H2O = trans-zeatin + D-ribose 5-phosphate. Cytokinin-activating enzyme working in the direct activation pathway. Phosphoribohydrolase that converts inactive cytokinin nucleotides to the biologically active free-base forms. The chain is Probable cytokinin riboside 5'-monophosphate phosphoribohydrolase LOG4 (LOGL4) from Oryza sativa subsp. japonica (Rice).